Here is a 198-residue protein sequence, read N- to C-terminus: Recombination protein RecR (198 aa).

Residues 57 to 72 (CSICGNLTDQDPCAIC) form a C4-type zinc finger. In terms of domain architecture, Toprim spans 80–175 (STILIVEDSR…KVTRLARGLA (96 aa)).

This sequence belongs to the RecR family.

May play a role in DNA repair. It seems to be involved in an RecBC-independent recombinational process of DNA repair. It may act with RecF and RecO. This chain is Recombination protein RecR, found in Streptococcus suis (strain 05ZYH33).